Here is an 825-residue protein sequence, read N- to C-terminus: MVSSSNLGFPRMGENRELKKLVENYWQGKVEETQFQKELKEIRINHWKLQKEAGIEIIPSNDFSLYDQVLDHIHLFGAIPKRYTPVVESEIEDGSNGLRTYFAMGRGYQTSKAATQVSETNTQGAFASKVEKSIDVGSMEMKKWFDTNYHYIVPEFEDSQQFKLTNYGGYSEPKPIHEFLEAKSIDIETRPVVLGPISFLLLGKSSDSSKPYSSKFDSLVHLNALLGVYEELFKQFEKIGVKSVQIDEPVLCFDLFETELIKNAYTTAFNVIHKAAPNINILIATYFGEIRENIDLITSLPVNGIHIDTIRSSSSEVESVLTKIPTSWTISIGIIDGRNVWKNDLTKSLVTLKNIIAKTGSDRILLAPSCSLLHCPHSLTREIGRVESQVLDWLAFSLEKLKEISFLTYALNKCTFTTENTITFPEDTCSKIKEYYQLNKESNQKRRESKLIHNDIVKKRVTEITPSMLKRENPFPVRREAQRKRLTTLPALFPTTTIGSFPQTKEVRLARSNFKSKKITPEAYDQFIRDEIRKCIKVQEECELDVLVHGEFERTDMVEYFGEYLAGFVFTQNGWVQSYGSRCVKPPIIYGDVNRPVPMTLEYTTFAQTLTTKPMKGMLTGPVTILQWSFVRDDQPRSETCFQIGLAIRDEVTDLENKGIACIQIDEPAIREGLPLRLSDWNQYLKWAIDSFLLSSTGVKDSTQIHSHMCYSDFNDIFESIQRMDTDVLTIENSKSDLKLLKAFEKYGYTNEIGPGLYDIHSPRIPSVEDMKDRVEQMLKYLSTNLLWINPDCGLKTREPETTRLALINMVKVAKQFREIYANKE.

Lys-19 and Asn-148 together coordinate 5-methyltetrahydropteroyltri-L-glutamate. Residues 498–500 (IGS) and Glu-551 each bind L-homocysteine. Residues 498-500 (IGS) and Glu-551 each bind L-methionine. Residues Asp-556, Tyr-579, 582 to 583 (RC), and Trp-628 each bind 5-methyltetrahydropteroyltri-L-glutamate. Asp-666 lines the L-homocysteine pocket. Asp-666 is a binding site for L-methionine. Residues His-708, Cys-710, and Glu-732 each contribute to the Zn(2+) site. Catalysis depends on His-761, which acts as the Proton donor. Cys-793 serves as a coordination point for Zn(2+).

It belongs to the vitamin-B12 independent methionine synthase family. Zn(2+) serves as cofactor.

The enzyme catalyses 5-methyltetrahydropteroyltri-L-glutamate + L-homocysteine = tetrahydropteroyltri-L-glutamate + L-methionine. The protein operates within amino-acid biosynthesis; L-methionine biosynthesis via de novo pathway; L-methionine from L-homocysteine (MetE route): step 1/1. Its function is as follows. Catalyzes the transfer of a methyl group from 5-methyltetrahydrofolate to homocysteine resulting in methionine formation. This chain is 5-methyltetrahydropteroyltriglutamate--homocysteine methyltransferase (metE), found in Dictyostelium discoideum (Social amoeba).